Consider the following 448-residue polypeptide: Chaperone SurA (448 aa).

The N-terminal stretch at 1–27 is a signal peptide; it reads MKKTLRFAAVAAGLVASLITVAPSASA. 2 PpiC domains span residues 185–288 and 301–399; these read QQDL…RLVD and IVQT…QVLG. A disordered region spans residues 230 to 249; the sequence is LAKSQSEADDAKKGGDLGFK.

The protein resides in the periplasm. It catalyses the reaction [protein]-peptidylproline (omega=180) = [protein]-peptidylproline (omega=0). Functionally, chaperone involved in the correct folding and assembly of outer membrane proteins. Recognizes specific patterns of aromatic residues and the orientation of their side chains, which are found more frequently in integral outer membrane proteins. May act in both early periplasmic and late outer membrane-associated steps of protein maturation. The polypeptide is Chaperone SurA (Burkholderia thailandensis (strain ATCC 700388 / DSM 13276 / CCUG 48851 / CIP 106301 / E264)).